We begin with the raw amino-acid sequence, 101 residues long: Large ribosomal subunit protein uL24 (101 aa).

It belongs to the universal ribosomal protein uL24 family. In terms of assembly, part of the 50S ribosomal subunit.

One of two assembly initiator proteins, it binds directly to the 5'-end of the 23S rRNA, where it nucleates assembly of the 50S subunit. In terms of biological role, one of the proteins that surrounds the polypeptide exit tunnel on the outside of the subunit. In Paracoccus denitrificans (strain Pd 1222), this protein is Large ribosomal subunit protein uL24.